The following is a 135-amino-acid chain: NADH-quinone oxidoreductase subunit A (135 aa).

Transmembrane regions (helical) follow at residues 9 to 29 (YFPI…LLTV), 67 to 87 (VGML…WVVV), and 97 to 117 (LFGF…FFYI).

This sequence belongs to the complex I subunit 3 family. In terms of assembly, NDH-1 is composed of 14 different subunits. Subunits NuoA, H, J, K, L, M, N constitute the membrane sector of the complex.

Its subcellular location is the cell inner membrane. The enzyme catalyses a quinone + NADH + 5 H(+)(in) = a quinol + NAD(+) + 4 H(+)(out). NDH-1 shuttles electrons from NADH, via FMN and iron-sulfur (Fe-S) centers, to quinones in the respiratory chain. The immediate electron acceptor for the enzyme in this species is believed to be ubiquinone. Couples the redox reaction to proton translocation (for every two electrons transferred, four hydrogen ions are translocated across the cytoplasmic membrane), and thus conserves the redox energy in a proton gradient. The sequence is that of NADH-quinone oxidoreductase subunit A from Solibacter usitatus (strain Ellin6076).